A 196-amino-acid chain; its full sequence is RNA-free ribonuclease P (196 aa).

This sequence belongs to the HARP family.

It carries out the reaction Endonucleolytic cleavage of RNA, removing 5'-extranucleotides from tRNA precursor.. Functionally, RNA-free RNase P that catalyzes the removal of the 5'-leader sequence from pre-tRNA to produce the mature 5'-terminus. The protein is RNA-free ribonuclease P of Thermodesulfovibrio yellowstonii (strain ATCC 51303 / DSM 11347 / YP87).